Here is a 380-residue protein sequence, read N- to C-terminus: Cytochrome b (380 aa).

Helical transmembrane passes span 34–54 (FGSL…LLAM), 78–99 (WLIR…FLHI), 114–134 (WNTG…GYVL), and 179–199 (FFAL…IHLT). Residues His-84 and His-98 each contribute to the heme b site. The heme b site is built by His-183 and His-197. His-202 serves as a coordination point for a ubiquinone. Transmembrane regions (helical) follow at residues 227–247 (IKDI…ALFS), 289–309 (LGGV…PFLH), 321–341 (LSQT…WIGS), and 348–368 (FIII…ILFP).

This sequence belongs to the cytochrome b family. As to quaternary structure, the cytochrome bc1 complex contains 11 subunits: 3 respiratory subunits (MT-CYB, CYC1 and UQCRFS1), 2 core proteins (UQCRC1 and UQCRC2) and 6 low-molecular weight proteins (UQCRH/QCR6, UQCRB/QCR7, UQCRQ/QCR8, UQCR10/QCR9, UQCR11/QCR10 and a cleavage product of UQCRFS1). This cytochrome bc1 complex then forms a dimer. The cofactor is heme b.

It is found in the mitochondrion inner membrane. Component of the ubiquinol-cytochrome c reductase complex (complex III or cytochrome b-c1 complex) that is part of the mitochondrial respiratory chain. The b-c1 complex mediates electron transfer from ubiquinol to cytochrome c. Contributes to the generation of a proton gradient across the mitochondrial membrane that is then used for ATP synthesis. The polypeptide is Cytochrome b (MT-CYB) (Alectoris rufa (Red-legged partridge)).